The primary structure comprises 359 residues: ELAV-like protein 2 (359 aa).

Residues 1–39 form a disordered region; the sequence is METQLSNGPTCNNTANGPTTVNNNCSSPVDSGNTEDSKT. RRM domains are found at residues 39 to 117 and 125 to 205; these read TNLI…YARP and ANLY…FANN. Phosphoserine is present on Ser221. The 79-residue stretch at 276 to 354 folds into the RRM 3 domain; sequence WCIFVYNLAP…RVLQVSFKTN (79 aa).

The protein belongs to the RRM elav family. Interacts with IGF2BP1. Interacts with MAP1B light chain LC1.

Functionally, RNA-binding protein that binds to the 3' untranslated region (3'UTR) of target mRNAs. Seems to recognize a GAAA motif. Can bind to its own 3'UTR, the FOS 3'UTR and the ID 3'UTR. This chain is ELAV-like protein 2 (Elavl2), found in Rattus norvegicus (Rat).